A 577-amino-acid chain; its full sequence is Acyl-coenzyme A synthetase ACSM1, mitochondrial (577 aa).

A mitochondrion-targeting transit peptide spans 1–31; the sequence is MQWLMRFRTLWGIHKSFHNIHPAPSQLRCRS. Lys85 carries the post-translational modification N6-succinyllysine. N6-acetyllysine; alternate is present on Lys146. N6-succinyllysine; alternate is present on Lys146. Position 183 is an N6-succinyllysine (Lys183). The residue at position 204 (Lys204) is an N6-acetyllysine; alternate. Residue Lys204 is modified to N6-succinyllysine; alternate. Position 214 is an N6-acetyllysine (Lys214). 226-234 serves as a coordination point for ATP; sequence TSGTTGFPK. Lys237 bears the N6-succinyllysine mark. N6-acetyllysine; alternate is present on residues Lys356 and Lys391. Residues Lys356 and Lys391 each carry the N6-succinyllysine; alternate modification. ATP-binding residues include Asp452 and Arg467. Lys531 is modified (N6-acetyllysine). Lys538 is subject to N6-acetyllysine; alternate. Lys538 is modified (N6-succinyllysine; alternate). Residue Lys549 is modified to N6-acetyllysine. Lys563 is a binding site for ATP.

It belongs to the ATP-dependent AMP-binding enzyme family. Monomer. Mg(2+) is required as a cofactor. It depends on Mn(2+) as a cofactor.

It is found in the mitochondrion matrix. It localises to the mitochondrion. The catalysed reaction is a medium-chain fatty acid + ATP + CoA = a medium-chain fatty acyl-CoA + AMP + diphosphate. The enzyme catalyses benzoate + ATP + CoA = benzoyl-CoA + AMP + diphosphate. It carries out the reaction (R)-lipoate + GTP + H(+) = (R)-lipoyl-GMP + diphosphate. It catalyses the reaction octanoate + ATP + CoA = octanoyl-CoA + AMP + diphosphate. The catalysed reaction is decanoate + ATP + CoA = decanoyl-CoA + AMP + diphosphate. The enzyme catalyses dodecanoate + ATP + CoA = dodecanoyl-CoA + AMP + diphosphate. It carries out the reaction tetradecanoate + ATP + CoA = tetradecanoyl-CoA + AMP + diphosphate. It catalyses the reaction hexanoate + ATP + CoA = hexanoyl-CoA + AMP + diphosphate. The catalysed reaction is butanoate + ATP + CoA = butanoyl-CoA + AMP + diphosphate. The enzyme catalyses hexadecanoate + ATP + CoA = hexadecanoyl-CoA + AMP + diphosphate. With respect to regulation, activated by monovalent cations, such as potassium, rubidium or ammonium. Catalyzes the activation of fatty acids by CoA to produce an acyl-CoA, the first step in fatty acid metabolism. Capable of activating medium-chain fatty acids (e.g. butyric (C4) to decanoic (C10) acids), and certain carboxylate-containing xenobiotics, e.g. benzoate. Also catalyzes the activation of lipoate to lipoyl-nucleoside monophosphate. Activates lipoate with GTP at a 1000-fold higher rate than with ATP and activates both (R)- and (S)-lipoate to the respective lipoyl-GMP, with a preference for (R)-lipoate. This is Acyl-coenzyme A synthetase ACSM1, mitochondrial (ACSM1) from Homo sapiens (Human).